The chain runs to 273 residues: Cysteine protease S273R (273 aa).

Catalysis depends on residues His168 and Asn187. Substrate is bound at residue Gln226. The active-site Nucleophile is Cys232.

This sequence belongs to the peptidase C63 family.

The protein resides in the host cytoplasm. The protein localises to the virion. Functionally, cysteine protease that plays several role during infection including processing of the structural polyprotein or inhibition of the host immune response. Catalyzes the maturation of the pp220 and pp62 polyprotein precursors into core-shell proteins. Plays a role in the disruption of host pyroptosis via specific cleavage of gasdermin D/GSDMD. In addition, strongly decreases the host cGAS-STING signaling by targeting IKBKE via its enzymatic activity. Also impairs host FOXJ1-mediated antiviral effect via degradation of FOXJ1. Cleaves host G3BP1 inducing loss of stress granules formation. Interacts with and induces the degradation of host STAT2 via polyubiquitination of the latter. The chain is Cysteine protease S273R from Ornithodoros (relapsing fever ticks).